The sequence spans 629 residues: DNA ligase B (629 aa).

K151 (N6-AMP-lysine intermediate) is an active-site residue. Over residues 588–597 the composition is skewed to polar residues; it reads LQKQHGTNTR. Positions 588 to 629 are disordered; it reads LQKQHGTNTRNEQKGDVRRVDVKQDNGTTWLPEQDSNLRPND. A compositionally biased stretch (basic and acidic residues) spans 598-611; sequence NEQKGDVRRVDVKQ. Polar residues predominate over residues 612-629; that stretch reads DNGTTWLPEQDSNLRPND.

Belongs to the NAD-dependent DNA ligase family. LigB subfamily.

It carries out the reaction NAD(+) + (deoxyribonucleotide)n-3'-hydroxyl + 5'-phospho-(deoxyribonucleotide)m = (deoxyribonucleotide)n+m + AMP + beta-nicotinamide D-nucleotide.. Catalyzes the formation of phosphodiester linkages between 5'-phosphoryl and 3'-hydroxyl groups in double-stranded DNA using NAD as a coenzyme and as the energy source for the reaction. This is DNA ligase B from Chromohalobacter salexigens (strain ATCC BAA-138 / DSM 3043 / CIP 106854 / NCIMB 13768 / 1H11).